Here is a 92-residue protein sequence, read N- to C-terminus: Acylphosphatase (92 aa).

The region spanning 5–92 (RVKVKVNGRV…GVFERFEVRF (88 aa)) is the Acylphosphatase-like domain. Active-site residues include Arg-20 and Asn-38.

Belongs to the acylphosphatase family.

It catalyses the reaction an acyl phosphate + H2O = a carboxylate + phosphate + H(+). This Syntrophotalea carbinolica (strain DSM 2380 / NBRC 103641 / GraBd1) (Pelobacter carbinolicus) protein is Acylphosphatase (acyP).